The sequence spans 134 residues: Ribosome-binding factor A (134 aa).

It belongs to the RbfA family. In terms of assembly, monomer. Binds 30S ribosomal subunits, but not 50S ribosomal subunits or 70S ribosomes.

It localises to the cytoplasm. Its function is as follows. One of several proteins that assist in the late maturation steps of the functional core of the 30S ribosomal subunit. Associates with free 30S ribosomal subunits (but not with 30S subunits that are part of 70S ribosomes or polysomes). Required for efficient processing of 16S rRNA. May interact with the 5'-terminal helix region of 16S rRNA. This Synechococcus sp. (strain CC9311) protein is Ribosome-binding factor A.